The primary structure comprises 495 residues: Mesoderm induction early response protein 1 (495 aa).

Disordered stretches follow at residues 1 to 25 and 76 to 131; these read MAEPSLRTASPGGSAASDDHEFEPS and GSTV…PSFT. Over residues 83 to 94 the composition is skewed to acidic residues; the sequence is GEEEEDEEDMDN. Residues 120–130 show a composition bias toward polar residues; the sequence is QSSNDDPTPSF. Residues 171 to 269 form the ELM2 domain; it reads KEIMVGSMFQ…EALRRLRFNV (99 aa). In terms of domain architecture, SANT spans 274–326; the sequence is EELSVWTEEECRNFEQGLKAYGKDFHLIQANKVRTRSVGECVAFYYMWKKSER. Disordered regions lie at residues 356–397 and 416–495; these read DESE…NGVS and HLNG…HGEV. Polar residues-rich tracts occupy residues 387–397 and 420–440; these read TASNNTQNGVS and PTISSSDPSSNETDTNGYNRE. Over residues 462-476 the composition is skewed to basic and acidic residues; the sequence is TNERPIKRQRMDSPG. Polar residues predominate over residues 477-489; that stretch reads KESTGSSEFSQEV.

The protein localises to the nucleus. In terms of biological role, transcriptional repressor regulating the expression of a number of genes. Probably functions through recruitment of histone deacetylases involved in chromatin silencing. The polypeptide is Mesoderm induction early response protein 1 (mier1) (Xenopus laevis (African clawed frog)).